We begin with the raw amino-acid sequence, 197 residues long: MEAFRTHTGIGVPLRRSNVDTDQIIPAVYLKRVTRTGFEDGLFAAWRNDPSFVLNLPPFDRGSVLVAGPDFGTGSSREHAVWALMDYGFRVVISSRFADIFRGNAGKAGLLAAEVNQNDVELIWKLIEQNPGLEITVNLQDRNIIAGTVMVPFTIDDYTAWRLLEGLDDIGLTLRKQSEIEDYERRRPSWKPRTLPV.

This sequence belongs to the LeuD family. LeuD type 1 subfamily. In terms of assembly, heterodimer of LeuC and LeuD.

The enzyme catalyses (2R,3S)-3-isopropylmalate = (2S)-2-isopropylmalate. The protein operates within amino-acid biosynthesis; L-leucine biosynthesis; L-leucine from 3-methyl-2-oxobutanoate: step 2/4. In terms of biological role, catalyzes the isomerization between 2-isopropylmalate and 3-isopropylmalate, via the formation of 2-isopropylmaleate. In Mycobacterium sp. (strain JLS), this protein is 3-isopropylmalate dehydratase small subunit.